We begin with the raw amino-acid sequence, 478 residues long: Cytochrome c lysine N-methyltransferase 1 (478 aa).

One can recognise an SET domain in the interval 32–284; that stretch reads PCVSIERSQI…DRFEVFISYC (253 aa). An SET-like region spans residues 199–299; the sequence is TRAVVLRVYA…VHFKHTYGFF (101 aa).

The protein belongs to the class V-like SAM-binding methyltransferase superfamily.

Its subcellular location is the cytoplasm. It localises to the cytosol. The enzyme catalyses L-lysyl-[cytochrome c] + S-adenosyl-L-methionine = N(6)-methyl-L-lysyl-[cytochrome c] + S-adenosyl-L-homocysteine + H(+). In terms of biological role, methyltransferase which mediates trimethylation of cytochrome c (CYC1). The chain is Cytochrome c lysine N-methyltransferase 1 (CTM1) from Eremothecium gossypii (strain ATCC 10895 / CBS 109.51 / FGSC 9923 / NRRL Y-1056) (Yeast).